Consider the following 405-residue polypeptide: L-rhamnonate dehydratase (405 aa).

Substrate contacts are provided by His33 and Arg59. Mg(2+)-binding residues include Asp226, Glu252, and Glu280. The active-site Proton acceptor is His329. Substrate is bound at residue Glu349.

Belongs to the mandelate racemase/muconate lactonizing enzyme family. RhamD subfamily. As to quaternary structure, homooctamer; tetramer of dimers. Mg(2+) serves as cofactor.

The enzyme catalyses L-rhamnonate = 2-dehydro-3-deoxy-L-rhamnonate + H2O. In terms of biological role, catalyzes the dehydration of L-rhamnonate to 2-keto-3-deoxy-L-rhamnonate (KDR). The polypeptide is L-rhamnonate dehydratase (Escherichia coli O45:K1 (strain S88 / ExPEC)).